A 343-amino-acid polypeptide reads, in one-letter code: Inositol 2-dehydrogenase (343 aa).

This sequence belongs to the Gfo/Idh/MocA family. As to quaternary structure, homotetramer.

It catalyses the reaction myo-inositol + NAD(+) = scyllo-inosose + NADH + H(+). Functionally, involved in the oxidation of myo-inositol (MI) to 2-keto-myo-inositol (2KMI or 2-inosose). In Streptomyces avermitilis (strain ATCC 31267 / DSM 46492 / JCM 5070 / NBRC 14893 / NCIMB 12804 / NRRL 8165 / MA-4680), this protein is Inositol 2-dehydrogenase.